The primary structure comprises 151 residues: SsrA-binding protein (151 aa).

It belongs to the SmpB family.

It is found in the cytoplasm. Required for rescue of stalled ribosomes mediated by trans-translation. Binds to transfer-messenger RNA (tmRNA), required for stable association of tmRNA with ribosomes. tmRNA and SmpB together mimic tRNA shape, replacing the anticodon stem-loop with SmpB. tmRNA is encoded by the ssrA gene; the 2 termini fold to resemble tRNA(Ala) and it encodes a 'tag peptide', a short internal open reading frame. During trans-translation Ala-aminoacylated tmRNA acts like a tRNA, entering the A-site of stalled ribosomes, displacing the stalled mRNA. The ribosome then switches to translate the ORF on the tmRNA; the nascent peptide is terminated with the 'tag peptide' encoded by the tmRNA and targeted for degradation. The ribosome is freed to recommence translation, which seems to be the essential function of trans-translation. The protein is SsrA-binding protein of Campylobacter concisus (strain 13826).